An 83-amino-acid chain; its full sequence is Gas vesicle protein G2 (83 aa).

It belongs to the gas vesicle GvpG family. In terms of assembly, gvpF to GvpM interact with each other in vitro, and may form multi-subunit complex(es).

Its subcellular location is the gas vesicle. Proteins GvpF to GvpM might be involved in nucleating gas vesicle formation. A minor component of the gas vesicle. Gas vesicles are hollow, gas filled proteinaceous nanostructures found in several microbial planktonic microorganisms. They allow positioning of halobacteria at the optimal depth for growth in the poorly aerated, shallow brine pools of their habitat. Functionally, expression of 2 c-vac DNA fragments containing 2 divergently transcribed regions (gvpE-gvpF-gvpG-gvpH-gvpI-gvpJ-gvpK-gvpL-gvpM and gvpA-gvpC-gvpN-gvpO) allows H.volcanii to produce gas vesicles. The chain is Gas vesicle protein G2 from Halobacterium salinarum (strain ATCC 700922 / JCM 11081 / NRC-1) (Halobacterium halobium).